The primary structure comprises 147 residues: D-aminoacyl-tRNA deacylase (147 aa).

The Gly-cisPro motif, important for rejection of L-amino acids motif lies at 137 to 138; the sequence is GP.

The protein belongs to the DTD family. Homodimer.

It is found in the cytoplasm. The catalysed reaction is glycyl-tRNA(Ala) + H2O = tRNA(Ala) + glycine + H(+). It catalyses the reaction a D-aminoacyl-tRNA + H2O = a tRNA + a D-alpha-amino acid + H(+). Functionally, an aminoacyl-tRNA editing enzyme that deacylates mischarged D-aminoacyl-tRNAs. Also deacylates mischarged glycyl-tRNA(Ala), protecting cells against glycine mischarging by AlaRS. Acts via tRNA-based rather than protein-based catalysis; rejects L-amino acids rather than detecting D-amino acids in the active site. By recycling D-aminoacyl-tRNA to D-amino acids and free tRNA molecules, this enzyme counteracts the toxicity associated with the formation of D-aminoacyl-tRNA entities in vivo and helps enforce protein L-homochirality. Upon expression in B.subtilis strain 168 confers resistance to D-Tyr and D-Asp, suggesting it acts on both of these amino acids. This chain is D-aminoacyl-tRNA deacylase, found in Bacillus amyloliquefaciens (Bacillus velezensis).